The primary structure comprises 245 residues: 1-(5-phosphoribosyl)-5-[(5-phosphoribosylamino)methylideneamino] imidazole-4-carboxamide isomerase (245 aa).

Asp-7 (proton acceptor) is an active-site residue. Asp-129 functions as the Proton donor in the catalytic mechanism.

This sequence belongs to the HisA/HisF family.

Its subcellular location is the cytoplasm. It catalyses the reaction 1-(5-phospho-beta-D-ribosyl)-5-[(5-phospho-beta-D-ribosylamino)methylideneamino]imidazole-4-carboxamide = 5-[(5-phospho-1-deoxy-D-ribulos-1-ylimino)methylamino]-1-(5-phospho-beta-D-ribosyl)imidazole-4-carboxamide. Its pathway is amino-acid biosynthesis; L-histidine biosynthesis; L-histidine from 5-phospho-alpha-D-ribose 1-diphosphate: step 4/9. The sequence is that of 1-(5-phosphoribosyl)-5-[(5-phosphoribosylamino)methylideneamino] imidazole-4-carboxamide isomerase from Enterobacter sp. (strain 638).